Here is a 422-residue protein sequence, read N- to C-terminus: MPEVKVPELAESITEGTIAEWLKNVGDSVEKGEAILELETDKVNVEVVSEEAGVLSEQLASEGDTVEVGQAIAVIGEGSGNASKENSNDNTPQQNEETNNKKEETTNKSADNAEVNQTNDYNQQRVNATPSARRYARENGVNLAEVSPKTNDVVRKEDIDKKQQAPASTQTTQQAPAKEEKKYNQYPTKPVIREKMSRRKKTAAKKLLEVSNNTAMLTTFNEVDMTNVMELRKRKKEQFMKDHDGTKLGFMSFFTKASVAALKKYPEVNAEIDGDDMITKQYYDIGVAVSTDDGLLVPFVRDCDKKNFAEIEAEIANLAVKAREKKLGLDDMVNGSFTITNGGIFGSMMSTPIINGNQAAILGMHSIITRPIAIDQDTIENRPMMYIALSYDHRIIDGKEAVGFLKTIKELIENPEDLLLES.

One can recognise a Lipoyl-binding domain in the interval 1-76 (MPEVKVPELA…EVGQAIAVIG (76 aa)). K42 bears the N6-lipoyllysine mark. A disordered region spans residues 77 to 184 (EGSGNASKEN…APAKEEKKYN (108 aa)). Polar residues-rich tracts occupy residues 80-94 (GNAS…TPQQ) and 114-130 (EVNQ…NATP). In terms of domain architecture, Peripheral subunit-binding (PSBD) spans 127–163 (NATPSARRYARENGVNLAEVSPKTNDVVRKEDIDKKQ). A compositionally biased stretch (basic and acidic residues) spans 152–163 (DVVRKEDIDKKQ). Low complexity predominate over residues 164–176 (QAPASTQTTQQAP). Active-site residues include H393 and D397.

The protein belongs to the 2-oxoacid dehydrogenase family. In terms of assembly, forms a 24-polypeptide structural core with octahedral symmetry. Part of the 2-oxoglutarate dehydrogenase (OGDH) complex composed of E1 (2-oxoglutarate dehydrogenase), E2 (dihydrolipoamide succinyltransferase) and E3 (dihydrolipoamide dehydrogenase); the complex contains multiple copies of the three enzymatic components (E1, E2 and E3). (R)-lipoate serves as cofactor.

The enzyme catalyses N(6)-[(R)-dihydrolipoyl]-L-lysyl-[protein] + succinyl-CoA = N(6)-[(R)-S(8)-succinyldihydrolipoyl]-L-lysyl-[protein] + CoA. It functions in the pathway amino-acid degradation; L-lysine degradation via saccharopine pathway; glutaryl-CoA from L-lysine: step 6/6. In terms of biological role, E2 component of the 2-oxoglutarate dehydrogenase (OGDH) complex which catalyzes the second step in the conversion of 2-oxoglutarate to succinyl-CoA and CO(2). In Staphylococcus aureus (strain bovine RF122 / ET3-1), this protein is Dihydrolipoyllysine-residue succinyltransferase component of 2-oxoglutarate dehydrogenase complex (odhB).